The sequence spans 187 residues: Putative manganese efflux pump MntP (187 aa).

A run of 6 helical transmembrane segments spans residues 8–28 (FLSIGLAIDAFAVSLSSGFII), 39–59 (IALFFGIFQGVMPLIGWLTGL), 65–85 (LANFDHWIAFILLAAIGGKMI), 106–126 (LFALAIATSIDALAAGLGLSV), 131–151 (ILLACTLIASITFSLSFIGVF), and 166–186 (ILGGITLIGIGTKILVEGLII).

Belongs to the MntP (TC 9.B.29) family.

Its subcellular location is the cell inner membrane. Probably functions as a manganese efflux pump. This Rippkaea orientalis (strain PCC 8801 / RF-1) (Cyanothece sp. (strain PCC 8801)) protein is Putative manganese efflux pump MntP.